The sequence spans 370 residues: Luciferin sulfotransferase (370 aa).

Residue 90-95 (KAGTTW) participates in 3'-phosphoadenylyl sulfate binding. Residue histidine 165 is the Proton acceptor of the active site. 3'-phosphoadenylyl sulfate is bound by residues arginine 189, serine 197, tyrosine 250, 284–289 (LSFESM), and 316–320 (FMRSG).

The protein belongs to the sulfotransferase 1 family.

It catalyses the reaction firefly D-luciferin + 3'-phosphoadenylyl sulfate = firefly D-sulfoluciferin + adenosine 3',5'-bisphosphate + H(+). The enzyme catalyses firefly L-luciferin + 3'-phosphoadenylyl sulfate = firefly L-sulfoluciferin + adenosine 3',5'-bisphosphate + H(+). Its activity is regulated as follows. Sulfoluciferin formation is inhibited by the product adenosine 3',5'-bisphosphate. Functionally, catalyzes the production of firefly sulfoluciferin from luciferin using the sulfo-donor 3'-phosphoadenylyl sulfate (PAPS). Is also able to catalyze the reverse reaction, i.e. the adenosine 3',5'-bisphosphate-dependent desulfonation of sulfoluciferin. Can use either D- or L-luciferin stereoisomer as substrate. Sulfoluciferin, which is not a substrate of P.pyralis luciferase, likely serves as a luciferin storage form in fireflies. In Photinus pyralis (Common eastern firefly), this protein is Luciferin sulfotransferase.